Here is a 219-residue protein sequence, read N- to C-terminus: Nuclear transcription factor Y subunit B-8 (219 aa).

Residues 1-26 (MPDSDNDSGGPSNYAGGELSSPREQD) are disordered. A DNA-binding region spans residues 29–35 (LPIANVS). The segment at 56-67 (VQECVSEFISFI) is subunit association domain (SAD). The span at 119–134 (AAASTTGAGTSAASTT) shows a compositional bias: low complexity. Disordered stretches follow at residues 119-142 (AAASTTGAGTSAASTTPPQQQHTA) and 166-219 (GQPM…NRGA). Over residues 190–206 (GGRGGFGHHPGGGGGGS) the composition is skewed to gly residues.

The protein belongs to the NFYB/HAP3 subunit family. In terms of assembly, heterotrimeric transcription factor composed of three components, NF-YA, NF-YB and NF-YC. NF-YB and NF-YC must interact and dimerize for NF-YA association and DNA binding. Interacts with NFYC2, NFYC4 and NFYC6.

The protein localises to the cytoplasm. Functionally, component of the NF-Y/HAP transcription factor complex. The sequence is that of Nuclear transcription factor Y subunit B-8 from Oryza sativa subsp. japonica (Rice).